The following is a 196-amino-acid chain: Probable malonic semialdehyde reductase RutE (196 aa).

Belongs to the nitroreductase family. HadB/RutE subfamily. Requires FMN as cofactor.

The enzyme catalyses 3-hydroxypropanoate + NADP(+) = 3-oxopropanoate + NADPH + H(+). In terms of biological role, may reduce toxic product malonic semialdehyde to 3-hydroxypropionic acid, which is excreted. The protein is Probable malonic semialdehyde reductase RutE of Escherichia coli O45:K1 (strain S88 / ExPEC).